The sequence spans 248 residues: Pyridoxine 5'-phosphate synthase (248 aa).

Asparagine 12 contributes to the 3-amino-2-oxopropyl phosphate binding site. 14–15 (DH) is a binding site for 1-deoxy-D-xylulose 5-phosphate. Arginine 23 serves as a coordination point for 3-amino-2-oxopropyl phosphate. Histidine 48 serves as the catalytic Proton acceptor. 1-deoxy-D-xylulose 5-phosphate contacts are provided by arginine 50 and histidine 55. Glutamate 75 acts as the Proton acceptor in catalysis. Residue threonine 105 participates in 1-deoxy-D-xylulose 5-phosphate binding. The Proton donor role is filled by histidine 196. Residues glycine 197 and 218 to 219 (GH) each bind 3-amino-2-oxopropyl phosphate.

It belongs to the PNP synthase family. As to quaternary structure, homooctamer; tetramer of dimers.

The protein localises to the cytoplasm. The enzyme catalyses 3-amino-2-oxopropyl phosphate + 1-deoxy-D-xylulose 5-phosphate = pyridoxine 5'-phosphate + phosphate + 2 H2O + H(+). Its pathway is cofactor biosynthesis; pyridoxine 5'-phosphate biosynthesis; pyridoxine 5'-phosphate from D-erythrose 4-phosphate: step 5/5. Its function is as follows. Catalyzes the complicated ring closure reaction between the two acyclic compounds 1-deoxy-D-xylulose-5-phosphate (DXP) and 3-amino-2-oxopropyl phosphate (1-amino-acetone-3-phosphate or AAP) to form pyridoxine 5'-phosphate (PNP) and inorganic phosphate. The protein is Pyridoxine 5'-phosphate synthase of Pseudomonas paraeruginosa (strain DSM 24068 / PA7) (Pseudomonas aeruginosa (strain PA7)).